We begin with the raw amino-acid sequence, 160 residues long: Protein-export protein SecB (160 aa).

It belongs to the SecB family. As to quaternary structure, homotetramer, a dimer of dimers. One homotetramer interacts with 1 SecA dimer.

It localises to the cytoplasm. Its function is as follows. One of the proteins required for the normal export of preproteins out of the cell cytoplasm. It is a molecular chaperone that binds to a subset of precursor proteins, maintaining them in a translocation-competent state. It also specifically binds to its receptor SecA. The sequence is that of Protein-export protein SecB from Beijerinckia indica subsp. indica (strain ATCC 9039 / DSM 1715 / NCIMB 8712).